Reading from the N-terminus, the 146-residue chain is Ribonuclease H (146 aa).

An RNase H type-1 domain is found at 1–143; that stretch reads MQKKIIVYTD…CDELARQAIK (143 aa). The Mg(2+) site is built by D10, E48, D70, and D135.

This sequence belongs to the RNase H family. As to quaternary structure, monomer. Mg(2+) serves as cofactor.

The protein resides in the cytoplasm. It catalyses the reaction Endonucleolytic cleavage to 5'-phosphomonoester.. In terms of biological role, endonuclease that specifically degrades the RNA of RNA-DNA hybrids. This chain is Ribonuclease H, found in Chlorobium phaeobacteroides (strain DSM 266 / SMG 266 / 2430).